A 526-amino-acid chain; its full sequence is GMP synthase [glutamine-hydrolyzing] (526 aa).

The Glutamine amidotransferase type-1 domain occupies 4-202 (KILILDFGSQ…VHDICGCDQS (199 aa)). Cysteine 81 acts as the Nucleophile in catalysis. Catalysis depends on residues histidine 176 and glutamate 178. In terms of domain architecture, GMPS ATP-PPase spans 203–395 (WNMPDYVETA…LGLPHDMVYR (193 aa)). 230–236 (SGGVDSS) is a binding site for ATP.

As to quaternary structure, homodimer.

The enzyme catalyses XMP + L-glutamine + ATP + H2O = GMP + L-glutamate + AMP + diphosphate + 2 H(+). It functions in the pathway purine metabolism; GMP biosynthesis; GMP from XMP (L-Gln route): step 1/1. Its function is as follows. Catalyzes the synthesis of GMP from XMP. The polypeptide is GMP synthase [glutamine-hydrolyzing] (Methylobacillus flagellatus (strain ATCC 51484 / DSM 6875 / VKM B-1610 / KT)).